A 478-amino-acid polypeptide reads, in one-letter code: Noelin-2 (478 aa).

Positions 1–16 are cleaved as a signal peptide; that stretch reads MSVPLLKIGAVLSTMA. N-linked (GlcNAc...) asparagine glycosylation is found at Asn33, Asn98, Asn179, Asn299, Asn334, Asn423, and Asn465. Coiled-coil stretches lie at residues 86–109 and 160–218; these read SREL…LELR and LEQY…QKLG. Residues 218–470 enclose the Olfactomedin-like domain; the sequence is GCGKLTGVSN…QVLYNVTLFH (253 aa). The cysteines at positions 219 and 401 are disulfide-linked.

As to quaternary structure, peripherally associated with AMPAR complex. AMPAR complex consists of an inner core made of 4 pore-forming GluA/GRIA proteins (GRIA1, GRIA2, GRIA3 and GRIA4) and 4 major auxiliary subunits arranged in a twofold symmetry. One of the two pairs of distinct binding sites is occupied either by CNIH2, CNIH3 or CACNG2, CACNG3. The other harbors CACNG2, CACNG3, CACNG4, CACNG8 or GSG1L. This inner core of AMPAR complex is complemented by outer core constituents binding directly to the GluA/GRIA proteins at sites distinct from the interaction sites of the inner core constituents. Outer core constituents include at least PRRT1, PRRT2, CKAMP44/SHISA9, FRRS1L and NRN1. The proteins of the inner and outer core serve as a platform for other, more peripherally associated AMPAR constituents, including OLFM2. Alone or in combination, these auxiliary subunits control the gating and pharmacology of the AMPAR complex and profoundly impact their biogenesis and protein processing. Interacts with GRIA2. Interacts with OLFM1 and OLFM3. Interacts with SRF; the interaction promotes dissociation of SRF from the transcriptional repressor HEY2. Interacts with RUNX2. In terms of tissue distribution, expressed in the brain (at protein level). Expressed in carotid arteries and the aorta, mainly in aortic SMCs.

It localises to the secreted. It is found in the synapse. Its subcellular location is the membrane. The protein localises to the nucleus. The protein resides in the cytoplasm. Functionally, involved in transforming growth factor beta (TGF-beta)-induced smooth muscle differentiation. TGF-beta induces expression and nuclear translocation of OLFM2 where it binds to SRF, causing its dissociation from the transcriptional repressor HEY2/HERP1 and facilitating binding of SRF to target genes. Plays a role in AMPAR complex organization. Is a regulator of vascular smooth-muscle cell (SMC) phenotypic switching, that acts by promoting RUNX2 and inhibiting MYOCD binding to SRF. SMC phenotypic switching is the process through which vascular SMCs undergo transition between a quiescent contractile phenotype and a proliferative synthetic phenotype in response to pathological stimuli. SMC phenotypic plasticity is essential for vascular development and remodeling. The sequence is that of Noelin-2 (Olfm2) from Rattus norvegicus (Rat).